The sequence spans 203 residues: Large ribosomal subunit protein uL13 (203 aa).

The residue at position 2 (Ala-2) is an N-acetylalanine. Arg-59 bears the Citrulline mark. Ser-77 is modified (phosphoserine). The residue at position 140 (Arg-140) is a Citrulline. Lys-191 carries the post-translational modification N6-acetyllysine.

Belongs to the universal ribosomal protein uL13 family. In terms of assembly, component of the 60S ribosome. Component of the GAIT complex. Interacts with EIF4G1. In terms of processing, phosphorylation at Ser-77 upon interferon-gamma treatment in monocytes involves a DAPK1-DAPK3 kinase cascade and is causing release from the ribosome, association with the GAIT complex and subsequent involvement in transcript-selective translation inhibition. Post-translationally, citrullinated by PADI4.

Its subcellular location is the cytoplasm. Associated with ribosomes but is not required for canonical ribosome function and has extra-ribosomal functions. Component of the GAIT (gamma interferon-activated inhibitor of translation) complex which mediates interferon-gamma-induced transcript-selective translation inhibition in inflammation processes. Upon interferon-gamma activation and subsequent phosphorylation dissociates from the ribosome and assembles into the GAIT complex which binds to stem loop-containing GAIT elements in the 3'-UTR of diverse inflammatory mRNAs (such as ceruplasmin) and suppresses their translation. In the GAIT complex interacts with m7G cap-bound eIF4G at or near the eIF3-binding site and blocks the recruitment of the 43S ribosomal complex. Involved in methylation of rRNA. This Oryctolagus cuniculus (Rabbit) protein is Large ribosomal subunit protein uL13 (RPL13A).